Here is a 219-residue protein sequence, read N- to C-terminus: uncharacterized protein (219 aa).

A disordered region spans residues 42 to 71; sequence RQPRVVPVTSSDPEVVDDEDDEDQSDDSDE. Positions 45–54 are enriched in low complexity; the sequence is RVVPVTSSDP. The segment covering 55–71 has biased composition (acidic residues); it reads EVVDDEDDEDQSDDSDE.

This is an uncharacterized protein from Dryophytes versicolor (chameleon treefrog).